Consider the following 546-residue polypeptide: Cation/calcium exchanger 5 (546 aa).

Transmembrane regions (helical) follow at residues 13–33, 88–108, 134–154, 163–183, 194–214, 218–238, 323–343, 356–376, 388–408, 423–445, 455–475, 492–512, and 522–542; these read ALCLTLISILIFFFLTTTTIP, NLFFSIPILSLLILLHFYILI, AVTLLALGNGAPDVFASVAAL, FGAILSAGTFVSAFVVGFVAI, SFVRDVLFYLIAALFLFYVYL, IFVWQAIGFVGFYIFFVGFVF, SANIVFCPFALLYTCNSFVQL, LPLWLVVLFMTSSLAFLHFTV, VIVVAFIMSVFWISTIAGELL, ALLGLTVLAWGNSVGDLVADVAV, MAGCFAGPMFNMLVGLGSALV, VGIVIAFVFLLLSLMGSLLVI, and FWGICLVGLYVAFTFVSLIIA.

Belongs to the Ca(2+):cation antiporter (CaCA) (TC 2.A.19) family. Cation/calcium exchanger (CCX) subfamily.

The protein resides in the cell membrane. Functionally, membrane-localized H(+)-dependent K(+) and Na(+) transporter. This is Cation/calcium exchanger 5 (CCX5) from Arabidopsis thaliana (Mouse-ear cress).